Here is a 113-residue protein sequence, read N- to C-terminus: Putative pterin-4-alpha-carbinolamine dehydratase (113 aa).

This sequence belongs to the pterin-4-alpha-carbinolamine dehydratase family.

The enzyme catalyses (4aS,6R)-4a-hydroxy-L-erythro-5,6,7,8-tetrahydrobiopterin = (6R)-L-erythro-6,7-dihydrobiopterin + H2O. In Nitrosospira multiformis (strain ATCC 25196 / NCIMB 11849 / C 71), this protein is Putative pterin-4-alpha-carbinolamine dehydratase.